The following is an 818-amino-acid chain: Actin filament-associated protein 1-like 2 (818 aa).

Tyrosine 56 is subject to Phosphotyrosine. Residues 66–163 (QNAESQGKAP…SKGKSAPYQW (98 aa)) are disordered. A compositionally biased stretch (polar residues) spans 85–94 (EPSQHSSAPQ). Residues 123-139 (YYEEAEPYDTSLNEDGE) are compositionally biased toward acidic residues. PH domains lie at 175–271 (DARI…EVSG) and 353–447 (SLET…SESG). Serine 408 carries the post-translational modification Phosphoserine. Tyrosine 413 carries the phosphotyrosine modification. Serine 484 is subject to Phosphoserine. The tract at residues 513–532 (AAVEPTEEATPVADDPNERE) is disordered. Residues 652–749 (AEIKLGKNRT…VKDNLKKAEA (98 aa)) adopt a coiled-coil conformation. The interval 765 to 787 (NVSPRPKAVTPASAPDCTPVNSA) is disordered.

In terms of assembly, interacts with SRC. Interacts with LCK when tyrosine phosphorylated. Post-translationally, tyrosine phosphorylated (by SRC). Detected in spleen and thyroid, and at lower levels in kidney, brain, lung and pancreas.

Its subcellular location is the cytoplasm. May play a role in a signaling cascade by enhancing the kinase activity of SRC. Contributes to SRC-regulated transcription activation. This is Actin filament-associated protein 1-like 2 (AFAP1L2) from Homo sapiens (Human).